Reading from the N-terminus, the 356-residue chain is MSL complex subunit 3B (356 aa).

In terms of domain architecture, MRG spans 2-350 (EERTVTLEIP…SEVHYSTRNP (349 aa)). Disordered stretches follow at residues 135–210 (TNRS…WQQD) and 225–247 (KTPV…SPVF). Low complexity predominate over residues 142-156 (LSPSLRLLNPSRPQS). 2 stretches are compositionally biased toward polar residues: residues 178-189 (AVQSLRRSSPHT) and 229-243 (HSRS…SQEG).

Its subcellular location is the nucleus. Probable non-catalytic component of the MSL histone acetyltransferase complex, a multiprotein complex that mediates the majority of histone H4 acetylation at 'Lys-16' (H4K16ac), an epigenetic mark that prevents chromatin compaction. This Homo sapiens (Human) protein is MSL complex subunit 3B.